A 62-amino-acid chain; its full sequence is Sperm protamine P1 (62 aa).

The interval 1 to 46 (MARCRRHSRSRSRSRNQCQRRRRRHYNRRRTYRRSRRHSRRRRVRR) is disordered.

It belongs to the protamine P1 family. In terms of tissue distribution, testis.

It is found in the nucleus. The protein localises to the chromosome. Its function is as follows. Protamines substitute for histones in the chromatin of sperm during the haploid phase of spermatogenesis. They compact sperm DNA into a highly condensed, stable and inactive complex. The polypeptide is Sperm protamine P1 (PRM1) (Planigale gilesi (Flat-skulled marsupial mouse)).